We begin with the raw amino-acid sequence, 481 residues long: ATP synthase subunit beta (481 aa).

167 to 174 (GGAGVGKT) provides a ligand contact to ATP.

Belongs to the ATPase alpha/beta chains family. As to quaternary structure, F-type ATPases have 2 components, CF(1) - the catalytic core - and CF(0) - the membrane proton channel. CF(1) has five subunits: alpha(3), beta(3), gamma(1), delta(1), epsilon(1). CF(0) has three main subunits: a(1), b(2) and c(9-12). The alpha and beta chains form an alternating ring which encloses part of the gamma chain. CF(1) is attached to CF(0) by a central stalk formed by the gamma and epsilon chains, while a peripheral stalk is formed by the delta and b chains.

It localises to the cell membrane. It catalyses the reaction ATP + H2O + 4 H(+)(in) = ADP + phosphate + 5 H(+)(out). Produces ATP from ADP in the presence of a proton gradient across the membrane. The catalytic sites are hosted primarily by the beta subunits. The chain is ATP synthase subunit beta from Corynebacterium jeikeium (strain K411).